Consider the following 392-residue polypeptide: Putative F-box protein At1g71320 (392 aa).

The F-box domain maps to 8–55 (NPKTIFIPDDIAEGIFHHLPIKSLARFKVLSKKWTSMIESTYFSHKRL).

The protein is Putative F-box protein At1g71320 of Arabidopsis thaliana (Mouse-ear cress).